Reading from the N-terminus, the 658-residue chain is Exoribonuclease 2 (658 aa).

An RNB domain is found at 189-530 (REDLTSLYFT…VNHRLIKQVL (342 aa)). The S1 motif domain occupies 576-658 (AVEFDCEIAD…ETRSIVGNII (83 aa)).

The protein belongs to the RNR ribonuclease family. RNase II subfamily.

Its subcellular location is the cytoplasm. The enzyme catalyses Exonucleolytic cleavage in the 3'- to 5'-direction to yield nucleoside 5'-phosphates.. In terms of biological role, involved in mRNA degradation. Hydrolyzes single-stranded polyribonucleotides processively in the 3' to 5' direction. This Actinobacillus pleuropneumoniae serotype 5b (strain L20) protein is Exoribonuclease 2.